The primary structure comprises 110 residues: MPELKTISLFMLTALAEIIGCYLPYLWLREGKTIWLLVPAALSLAVFTWLLTLHPTASGRVYAAYGGVYIFMAVLWLWIVDGIRPTTWDMIGSAVALLGMAIIMFAPRTT.

The next 4 membrane-spanning stretches (helical) occupy residues 7–27 (ISLFMLTALAEIIGCYLPYLW), 33–53 (TIWLLVPAALSLAVFTWLLTL), 63–83 (AAYGGVYIFMAVLWLWIVDGI), and 87–107 (TWDMIGSAVALLGMAIIMFAP).

Belongs to the UPF0060 family.

The protein resides in the cell inner membrane. The protein is UPF0060 membrane protein Mmwyl1_1139 of Marinomonas sp. (strain MWYL1).